A 214-amino-acid chain; its full sequence is Ras-like protein 2 (214 aa).

Residues 19 to 24 (GVGKSC), 35 to 41 (VDEYDPT), 65 to 66 (AG), 122 to 125 (NKCD), and 152 to 154 (SAK) each bind GTP. Positions 38–46 (YDPTIEDSY) match the Effector region motif. A disordered region spans residues 178 to 197 (QGYSTGSGGSNAGGPSNKME). The residue at position 211 (cysteine 211) is a Cysteine methyl ester. A lipid anchor (S-farnesyl cysteine) is attached at cysteine 211. Positions 212–214 (VLM) are cleaved as a propeptide — removed in mature form.

Belongs to the small GTPase superfamily. Ras family. As to quaternary structure, interacts with farnesyltransferase beta subunit RAM1.

The protein localises to the cell membrane. Its activity is regulated as follows. Alternates between an inactive form bound to GDP and an active form bound to GTP. Activated by a guanine nucleotide-exchange factor (GEF) and inactivated by a GTPase-activating protein (GAP). Functionally, modulates the activity of the adenylate cyclase catalytic subunit and therefore affects the biosynthesis of cyclic-AMP. Plays a role in both surface attachment and surface recognition of appressoria, a highly specialized infection structure for plant penetration. Regulates appressorium formation by coordinated regulation of cAMP signaling and Pmk1 MAPK pathways. In Pyricularia oryzae (strain 70-15 / ATCC MYA-4617 / FGSC 8958) (Rice blast fungus), this protein is Ras-like protein 2.